We begin with the raw amino-acid sequence, 554 residues long: Glucose-6-phosphate isomerase (554 aa).

Residue E358 is the Proton donor of the active site. Catalysis depends on residues H389 and K515. Residues 527–540 (SDGSPQRQSDSSTD) are compositionally biased toward polar residues. The segment at 527–554 (SDGSPQRQSDSSTDALVRRYRTQRGRTG) is disordered. Basic residues predominate over residues 544-554 (RRYRTQRGRTG).

The protein belongs to the GPI family.

Its subcellular location is the cytoplasm. The catalysed reaction is alpha-D-glucose 6-phosphate = beta-D-fructose 6-phosphate. It functions in the pathway carbohydrate biosynthesis; gluconeogenesis. Its pathway is carbohydrate degradation; glycolysis; D-glyceraldehyde 3-phosphate and glycerone phosphate from D-glucose: step 2/4. Functionally, catalyzes the reversible isomerization of glucose-6-phosphate to fructose-6-phosphate. The chain is Glucose-6-phosphate isomerase from Mycobacterium ulcerans (strain Agy99).